A 120-amino-acid chain; its full sequence is NAD(P)H-quinone oxidoreductase subunit 3, chloroplastic (120 aa).

3 helical membrane-spanning segments follow: residues 2–22 (FLLYEYDIFWAFLIISSVIPI), 64–84 (MFALVFVVFDVETIFLYPWAL), and 88–108 (ILGVSVFIEALIFVLILVLGL).

Belongs to the complex I subunit 3 family. As to quaternary structure, NDH is composed of at least 16 different subunits, 5 of which are encoded in the nucleus.

The protein localises to the plastid. It localises to the chloroplast thylakoid membrane. It carries out the reaction a plastoquinone + NADH + (n+1) H(+)(in) = a plastoquinol + NAD(+) + n H(+)(out). It catalyses the reaction a plastoquinone + NADPH + (n+1) H(+)(in) = a plastoquinol + NADP(+) + n H(+)(out). Its function is as follows. NDH shuttles electrons from NAD(P)H:plastoquinone, via FMN and iron-sulfur (Fe-S) centers, to quinones in the photosynthetic chain and possibly in a chloroplast respiratory chain. The immediate electron acceptor for the enzyme in this species is believed to be plastoquinone. Couples the redox reaction to proton translocation, and thus conserves the redox energy in a proton gradient. In Oenothera biennis (German evening primrose), this protein is NAD(P)H-quinone oxidoreductase subunit 3, chloroplastic.